Reading from the N-terminus, the 479-residue chain is Transcription factor CP2-like protein 1 (479 aa).

The 238-residue stretch at 43–280 (RLPPLQYVLC…PSPSYNGSPN (238 aa)) folds into the Grh/CP2 DB domain. 2 disordered regions span residues 219–245 (KPKG…KEKY) and 271–301 (PSPS…LPVG). The segment covering 221–245 (KGADRKQKTDREKMEKRTAQEKEKY) has biased composition (basic and acidic residues). Residues 261-365 (PDVAYQVNSA…IRLFNAIKGR (105 aa)) are SAM2-like domain. Over residues 271-281 (PSPSYNGSPNS) the composition is skewed to polar residues.

It belongs to the grh/CP2 family. CP2 subfamily. As to quaternary structure, forms homohexamers via its SAM-like domain. Interacts with MTA1; which is indispensable for TFCP2l1-mediated self-renewal-promoting effect and endoderm-inhibiting action. Highly expressed in placental JEG-3 cells and very low levels of expression in non-steroidogenic cells. No expression was seen in adrenal NCI-H295A cells or in adrenal tissue.

It localises to the nucleus. Its function is as follows. Transcription factor that facilitates establishment and maintenance of pluripotency in embryonic stem cells (ESCs). With KLF2, acts as the major effector of self-renewal that mediates induction of pluripotency downstream of LIF/STAT3 and Wnt/beta-catenin signaling. Required for normal duct development in the salivary gland and kidney. Coordinates the development of the kidney collecting ducts intercalated (IC) and principal (PC) cells, which regulate acid-base and salt-water homeostasis, respectively. Regulates the expression of IC genes including subunits B1 and D2 of the V-ATPase complex, OXGR1, CA12, SLC4A1, AQP6 and IC-specific transcription factor FOXI1. Also regulates the expression of JAG1 and subsequent notch signaling in the collecting duct. JAG1 initiates notch signaling in PCs but inhibits notch signaling in ICs. Acts as a transcriptional suppressor that may suppress UBP1-mediated transcriptional activation. Modulates the placental expression of CYP11A1. This chain is Transcription factor CP2-like protein 1 (TFCP2L1), found in Homo sapiens (Human).